The chain runs to 279 residues: Undecaprenyl-diphosphatase (279 aa).

Helical transmembrane passes span 2-22, 44-64, 85-105, 113-133, 163-183, 188-208, 223-243, and 255-275; these read LIIE…TEWL, AFIE…VMLI, WQLW…AVPL, FYFM…FIWI, VLSI…AIIL, TVAA…YSGL, AQVL…LLAI, and FTIF…YSFF.

It belongs to the UppP family.

It is found in the cell membrane. The catalysed reaction is di-trans,octa-cis-undecaprenyl diphosphate + H2O = di-trans,octa-cis-undecaprenyl phosphate + phosphate + H(+). Catalyzes the dephosphorylation of undecaprenyl diphosphate (UPP). Confers resistance to bacitracin. In Streptococcus pyogenes serotype M12 (strain MGAS2096), this protein is Undecaprenyl-diphosphatase.